The chain runs to 162 residues: MTVFEGNFENSKDLNIGIVVSRFNDLITNKLLSGCIDCLKRHGVNVETNENKVDIAWVPGAYELPLITQLMARTKKYDVIITLGAVIRGDTPHFDVVISEASKGIASVTRDTSIPIIFGVLTTDTMQQALERAGIKNNLGWGYALQALEMGSLVNAMKISKV.

5-amino-6-(D-ribitylamino)uracil-binding positions include F23, 61–63 (AYE), and 85–87 (AVI). A (2S)-2-hydroxy-3-oxobutyl phosphate-binding site is contributed by 90–91 (DT). Residue H93 is the Proton donor of the active site. F118 contacts 5-amino-6-(D-ribitylamino)uracil. Residue R132 participates in (2S)-2-hydroxy-3-oxobutyl phosphate binding.

It belongs to the DMRL synthase family.

The enzyme catalyses (2S)-2-hydroxy-3-oxobutyl phosphate + 5-amino-6-(D-ribitylamino)uracil = 6,7-dimethyl-8-(1-D-ribityl)lumazine + phosphate + 2 H2O + H(+). The protein operates within cofactor biosynthesis; riboflavin biosynthesis; riboflavin from 2-hydroxy-3-oxobutyl phosphate and 5-amino-6-(D-ribitylamino)uracil: step 1/2. Functionally, catalyzes the formation of 6,7-dimethyl-8-ribityllumazine by condensation of 5-amino-6-(D-ribitylamino)uracil with 3,4-dihydroxy-2-butanone 4-phosphate. This is the penultimate step in the biosynthesis of riboflavin. In Synechococcus sp. (strain CC9902), this protein is 6,7-dimethyl-8-ribityllumazine synthase.